Consider the following 534-residue polypeptide: 2,3-bisphosphoglycerate-independent phosphoglycerate mutase (534 aa).

Asp-15 and Ser-65 together coordinate Mn(2+). Catalysis depends on Ser-65, which acts as the Phosphoserine intermediate. Residues His-126, 156–157, Arg-188, Arg-194, 261–264, and Lys-334 each bind substrate; these read RD and RPDR. Residues Asp-401, His-405, Asp-442, His-443, and His-460 each coordinate Mn(2+).

This sequence belongs to the BPG-independent phosphoglycerate mutase family. It depends on Mn(2+) as a cofactor.

It is found in the plastid. It localises to the chloroplast. The catalysed reaction is (2R)-2-phosphoglycerate = (2R)-3-phosphoglycerate. It participates in carbohydrate degradation; glycolysis; pyruvate from D-glyceraldehyde 3-phosphate: step 3/5. Functionally, catalyzes the interconversion of 2-phosphoglycerate and 3-phosphoglycerate. The sequence is that of 2,3-bisphosphoglycerate-independent phosphoglycerate mutase from Pyropia yezoensis (Susabi-nori).